A 389-amino-acid chain; its full sequence is Indole-3-acetate monooxygenase (389 aa).

The protein belongs to the HpaH/HsaA monooxygenase family.

The catalysed reaction is (indol-3-yl)acetate + NADH + O2 + H(+) = 2-hydroxy-(1H-indol-3-yl)acetate + NAD(+) + H2O. It catalyses the reaction indole + NADH + O2 + H(+) = indoxyl + NAD(+) + H2O. Functionally, involved in the degradation of the plant hormone indole-3-acetic acid (IAA). Catalyzes the first step of the pathway, the conversion of IAA to 2-hydroxy-IAA (2-OH-IAA). Can also convert indole to indoxyl, which spontaneously dimerizes in the presence of oxygen to form the blue pigment indigo. The sequence is that of Indole-3-acetate monooxygenase from Acinetobacter baumannii (strain ATCC 19606 / DSM 30007 / JCM 6841 / CCUG 19606 / CIP 70.34 / NBRC 109757 / NCIMB 12457 / NCTC 12156 / 81).